The chain runs to 217 residues: KS1 protein (217 aa).

A signal peptide spans 1 to 16 (MKLIIVLVMMLVCVYS). Over residues 24-47 (PKNHEVPAKKQFAETKVEKKKRSD) the composition is skewed to basic and acidic residues. 2 disordered regions span residues 24-58 (PKNH…DDDD) and 72-205 (EDDD…LKIK). 2 tandem repeats follow at residues 32–81 (KKQF…VDGG) and 98–147 (KKKK…YDED). The 2 X 50 AA approximate repeats stretch occupies residues 32–147 (KKQFAETKVE…EEDDDCYDED (116 aa)). Acidic residues-rich tracts occupy residues 48–58 (DGDEEICDDDD) and 72–94 (EDDD…DDCQ). Positions 98 to 110 (KKKKRETKPKLKK) are enriched in basic residues. Over residues 114–145 (DEEEEECEEDDEDCEVEVDIEECDEEDDDCYD) the composition is skewed to acidic residues. Residues 149 to 188 (KKKKENKLKKESKKKNSKKTVPKNAKKSSKRSTSTKKTSQ) show a composition bias toward basic residues.

Expressed in tentacle-specific epithelial cells (battery cells) as well as in a small fraction of ectodermal epithelial cells in the gastric region subjacent to the tentacles (the tentacle formation region). The later cells are committed to become battery cells.

In terms of biological role, responds to early signals of head formation in hydra. The polypeptide is KS1 protein (KS1) (Hydra vulgaris (Hydra)).